The chain runs to 129 residues: Small ribosomal subunit protein uS8 (129 aa).

It belongs to the universal ribosomal protein uS8 family. In terms of assembly, part of the 30S ribosomal subunit.

One of the primary rRNA binding proteins, it binds directly to 16S rRNA central domain where it helps coordinate assembly of the platform of the 30S subunit. This is Small ribosomal subunit protein uS8 from Picrophilus torridus (strain ATCC 700027 / DSM 9790 / JCM 10055 / NBRC 100828 / KAW 2/3).